A 48-amino-acid chain; its full sequence is Delta-stichotoxin-Hmg4a (48 aa).

3 disulfides stabilise this stretch: Cys3–Cys43, Cys5–Cys33, and Cys26–Cys44.

This sequence belongs to the sea anemone sodium channel inhibitory toxin family. Type II subfamily.

The protein resides in the secreted. Its subcellular location is the nematocyst. In terms of biological role, binds specifically to voltage-gated sodium channels (Nav), thereby delaying their inactivation during signal transduction. Its toxicity is weaker than that of RpIII (AC P08380). In Heteractis magnifica (Magnificent sea anemone), this protein is Delta-stichotoxin-Hmg4a.